The following is a 502-amino-acid chain: Aspartyl/glutamyl-tRNA(Asn/Gln) amidotransferase subunit B (502 aa).

The protein belongs to the GatB/GatE family. GatB subfamily. Heterotrimer of A, B and C subunits.

The enzyme catalyses L-glutamyl-tRNA(Gln) + L-glutamine + ATP + H2O = L-glutaminyl-tRNA(Gln) + L-glutamate + ADP + phosphate + H(+). It catalyses the reaction L-aspartyl-tRNA(Asn) + L-glutamine + ATP + H2O = L-asparaginyl-tRNA(Asn) + L-glutamate + ADP + phosphate + 2 H(+). Functionally, allows the formation of correctly charged Asn-tRNA(Asn) or Gln-tRNA(Gln) through the transamidation of misacylated Asp-tRNA(Asn) or Glu-tRNA(Gln) in organisms which lack either or both of asparaginyl-tRNA or glutaminyl-tRNA synthetases. The reaction takes place in the presence of glutamine and ATP through an activated phospho-Asp-tRNA(Asn) or phospho-Glu-tRNA(Gln). The sequence is that of Aspartyl/glutamyl-tRNA(Asn/Gln) amidotransferase subunit B from Ruegeria sp. (strain TM1040) (Silicibacter sp.).